The chain runs to 269 residues: Phosphonoacetaldehyde hydrolase (269 aa).

Catalysis depends on Asp-10, which acts as the Nucleophile. Residues Asp-10 and Ala-12 each coordinate Mg(2+). The active-site Schiff-base intermediate with substrate is Lys-52. Residue Asp-186 coordinates Mg(2+).

The protein belongs to the HAD-like hydrolase superfamily. PhnX family. In terms of assembly, homodimer. Requires Mg(2+) as cofactor.

It carries out the reaction phosphonoacetaldehyde + H2O = acetaldehyde + phosphate + H(+). In terms of biological role, involved in phosphonate degradation. The polypeptide is Phosphonoacetaldehyde hydrolase (Salmonella heidelberg (strain SL476)).